We begin with the raw amino-acid sequence, 424 residues long: Protein ImpB (424 aa).

The region spanning 2–189 (FALADINSFY…QPVGEVWGVG (188 aa)) is the UmuC domain.

The protein belongs to the DNA polymerase type-Y family.

In terms of biological role, involved in UV protection and mutation. This Salmonella typhimurium protein is Protein ImpB (impB).